The chain runs to 876 residues: Alanine--tRNA ligase (876 aa).

Lys74 is modified (N6-acetyllysine). Zn(2+)-binding residues include His564, His568, Cys666, and His670.

Belongs to the class-II aminoacyl-tRNA synthetase family. As to quaternary structure, homotetramer. Requires Zn(2+) as cofactor.

Its subcellular location is the cytoplasm. The enzyme catalyses tRNA(Ala) + L-alanine + ATP = L-alanyl-tRNA(Ala) + AMP + diphosphate. In terms of biological role, catalyzes the attachment of alanine to tRNA(Ala) in a two-step reaction: alanine is first activated by ATP to form Ala-AMP and then transferred to the acceptor end of tRNA(Ala). Also edits incorrectly charged Ser-tRNA(Ala) and Gly-tRNA(Ala) via its editing domain. In Escherichia coli O6:K15:H31 (strain 536 / UPEC), this protein is Alanine--tRNA ligase.